The chain runs to 319 residues: Methionyl-tRNA formyltransferase (319 aa).

116–119 contacts (6S)-5,6,7,8-tetrahydrofolate; the sequence is SLLP.

It belongs to the Fmt family.

It catalyses the reaction L-methionyl-tRNA(fMet) + (6R)-10-formyltetrahydrofolate = N-formyl-L-methionyl-tRNA(fMet) + (6S)-5,6,7,8-tetrahydrofolate + H(+). Functionally, attaches a formyl group to the free amino group of methionyl-tRNA(fMet). The formyl group appears to play a dual role in the initiator identity of N-formylmethionyl-tRNA by promoting its recognition by IF2 and preventing the misappropriation of this tRNA by the elongation apparatus. The sequence is that of Methionyl-tRNA formyltransferase from Chlorobium phaeovibrioides (strain DSM 265 / 1930) (Prosthecochloris vibrioformis (strain DSM 265)).